A 298-amino-acid chain; its full sequence is NADH-cytochrome b5 reductase 2 (298 aa).

Residues 13–33 (FLPFAIGAVAVTAGALYLNGW) form a helical membrane-spanning segment. Residues 48–152 (RKWIDLELEK…QGPIPKWQWK (105 aa)) enclose the FAD-binding FR-type domain. Residue 155–190 (SFDTITLLGGGTGITPLYQLVHHITQNKEDKTKINL) participates in FAD binding.

This sequence belongs to the flavoprotein pyridine nucleotide cytochrome reductase family. It depends on FAD as a cofactor.

The protein localises to the mitochondrion outer membrane. The enzyme catalyses 2 Fe(III)-[cytochrome b5] + NADH = 2 Fe(II)-[cytochrome b5] + NAD(+) + H(+). Its function is as follows. May mediate the reduction of outer membrane cytochrome b5. This Candida glabrata (strain ATCC 2001 / BCRC 20586 / JCM 3761 / NBRC 0622 / NRRL Y-65 / CBS 138) (Yeast) protein is NADH-cytochrome b5 reductase 2 (MCR1).